Consider the following 1405-residue polypeptide: DNA-directed RNA polymerase subunit beta' (1405 aa).

Residues cysteine 70, cysteine 72, cysteine 85, and cysteine 88 each coordinate Zn(2+). Residues aspartate 460, aspartate 462, and aspartate 464 each contribute to the Mg(2+) site. Zn(2+)-binding residues include cysteine 814, cysteine 888, cysteine 895, and cysteine 898.

It belongs to the RNA polymerase beta' chain family. The RNAP catalytic core consists of 2 alpha, 1 beta, 1 beta' and 1 omega subunit. When a sigma factor is associated with the core the holoenzyme is formed, which can initiate transcription. It depends on Mg(2+) as a cofactor. Zn(2+) is required as a cofactor.

It carries out the reaction RNA(n) + a ribonucleoside 5'-triphosphate = RNA(n+1) + diphosphate. In terms of biological role, DNA-dependent RNA polymerase catalyzes the transcription of DNA into RNA using the four ribonucleoside triphosphates as substrates. The sequence is that of DNA-directed RNA polymerase subunit beta' from Shewanella woodyi (strain ATCC 51908 / MS32).